The primary structure comprises 202 residues: Probable pathogenesis-related protein CaO19.2336 (202 aa).

The signal sequence occupies residues 1–20 (MKTLLFIYLQLLLLLSIIIG). N-linked (GlcNAc...) asparagine glycans are attached at residues Asn-58 and Asn-152. In terms of domain architecture, SCP spans 66–179 (LKEHNNKRKL…LNALYIVCSY (114 aa)).

This sequence belongs to the CRISP family.

It localises to the secreted. Secreted protein that acts as a virulence factor during infections. This Candida albicans (strain SC5314 / ATCC MYA-2876) (Yeast) protein is Probable pathogenesis-related protein CaO19.2336.